The following is a 419-amino-acid chain: 20-hydroxy-prefusarin hydrolase FUS2 (419 aa).

Residue Ser238 is part of the active site.

It belongs to the AB hydrolase superfamily. FUS2 hydrolase family.

It participates in mycotoxin biosynthesis. 20-hydroxy-prefusarin hydrolase; part of the gene cluster that mediates the biosynthesis of the mycotoxin fusarin C. Within the cluster, FUS1, FUS2, FUS8 and FUS9 are sufficient for fusarin production. The roles of the other FUS members are yet undetermined. The fusarin C synthetase FUS1 is responsible for the condensation of one acetyl-coenzyme A (CoA) unit with six malonyl-CoA units and the amide linkage of the arising heptaketide and homoserine, subsequently releasing the first intermediate, prefusarin, as an alcohol with an open ring structure. The cytochrome P450 monooxygenase FUS8 participates in multiple oxidation processes at carbon C-20 and is able to use the FUS1 product as substrate, resulting in formation of 20-hydroxy-prefusarin. This reaction seems to be essential before the 2-pyrrolidone ring closure can be catalyzed by FUS2, generating 20-hydroxy-fusarin. FUS8 is able to further oxidizes carbon C-20 after ring closure, resulting in the formation of carboxy-fusarin C. As the last step, FUS9 methylates the hydroxyl group at C-21 to generate fusarin C. Fusarin C can then rearrange to epi-fusarin C, the (z)-isomers, and fusarin A and fusarin D. This Gibberella moniliformis (strain M3125 / FGSC 7600) (Maize ear and stalk rot fungus) protein is 20-hydroxy-prefusarin hydrolase FUS2.